We begin with the raw amino-acid sequence, 332 residues long: Glycerol-3-phosphate dehydrogenase [NAD(P)+] (332 aa).

The NADPH site is built by Trp11, Arg30, and Lys108. Positions 108, 137, and 139 each coordinate sn-glycerol 3-phosphate. Residue Ala141 coordinates NADPH. 5 residues coordinate sn-glycerol 3-phosphate: Lys192, Asp245, Ser255, Arg256, and Asn257. The active-site Proton acceptor is Lys192. Arg256 lines the NADPH pocket. The NADPH site is built by Val280 and Glu282.

Belongs to the NAD-dependent glycerol-3-phosphate dehydrogenase family.

The protein resides in the cytoplasm. The enzyme catalyses sn-glycerol 3-phosphate + NAD(+) = dihydroxyacetone phosphate + NADH + H(+). It carries out the reaction sn-glycerol 3-phosphate + NADP(+) = dihydroxyacetone phosphate + NADPH + H(+). It functions in the pathway membrane lipid metabolism; glycerophospholipid metabolism. Catalyzes the reduction of the glycolytic intermediate dihydroxyacetone phosphate (DHAP) to sn-glycerol 3-phosphate (G3P), the key precursor for phospholipid synthesis. The sequence is that of Glycerol-3-phosphate dehydrogenase [NAD(P)+] from Burkholderia cenocepacia (strain HI2424).